The following is a 480-amino-acid chain: Phosphoglucosamine mutase (480 aa).

The disordered stretch occupies residues 1–41 (MPKHTKKDPREGAPSATGEPQKQAAGRKLFGTDGVRGVANQ). Ser-127 functions as the Phosphoserine intermediate in the catalytic mechanism. 4 residues coordinate Mg(2+): Ser-127, Asp-269, Asp-271, and Asp-273. Ser-127 carries the post-translational modification Phosphoserine.

It belongs to the phosphohexose mutase family. Mg(2+) serves as cofactor. Post-translationally, activated by phosphorylation.

The enzyme catalyses alpha-D-glucosamine 1-phosphate = D-glucosamine 6-phosphate. In terms of biological role, catalyzes the conversion of glucosamine-6-phosphate to glucosamine-1-phosphate. This chain is Phosphoglucosamine mutase, found in Sorangium cellulosum (strain So ce56) (Polyangium cellulosum (strain So ce56)).